Reading from the N-terminus, the 423-residue chain is Gamma-glutamyl phosphate reductase (423 aa).

This sequence belongs to the gamma-glutamyl phosphate reductase family.

Its subcellular location is the cytoplasm. It catalyses the reaction L-glutamate 5-semialdehyde + phosphate + NADP(+) = L-glutamyl 5-phosphate + NADPH + H(+). The protein operates within amino-acid biosynthesis; L-proline biosynthesis; L-glutamate 5-semialdehyde from L-glutamate: step 2/2. Catalyzes the NADPH-dependent reduction of L-glutamate 5-phosphate into L-glutamate 5-semialdehyde and phosphate. The product spontaneously undergoes cyclization to form 1-pyrroline-5-carboxylate. The sequence is that of Gamma-glutamyl phosphate reductase from Burkholderia ambifaria (strain ATCC BAA-244 / DSM 16087 / CCUG 44356 / LMG 19182 / AMMD) (Burkholderia cepacia (strain AMMD)).